The sequence spans 301 residues: G-protein coupled receptor homolog U51 (301 aa).

Topologically, residues 1–15 (MEKETKSLAWPATAE) are extracellular. Residues 16-36 (FYGWVFIFSSIQLCTMVLLTV) traverse the membrane as a helical segment. The Cytoplasmic segment spans residues 37–48 (RFNSFKVGREYA). A helical membrane pass occupies residues 49-69 (VFTFAGMSFNCFLLPIKMGLL). Topologically, residues 70-82 (SGHWSLPRDFCAI) are extracellular. Residues 83 to 103 (LLYIDDFSIYFSSWSLVFMAI) traverse the membrane as a helical segment. The Cytoplasmic portion of the chain corresponds to 104–122 (ERINHFCYSTPLLNENSKA). The helical transmembrane segment at 123–143 (LAKVCFPIVWIISGVQALQML) threads the bilayer. Topologically, residues 144-168 (NNYKATALQNETPQCFLAFLRSGYD) are extracellular. Residues 169–189 (MWLMLVYSVMIPVMLVFIYIY) form a helical membrane-spanning segment. Residues 190–199 (SKNFMLLKDE) are Cytoplasmic-facing. A helical membrane pass occupies residues 200–220 (LSTVTTYLCIYLLLGTIAHLP). The Extracellular portion of the chain corresponds to 221 to 238 (KAGLSEIESDKIFYGLRD). Residues 239–259 (IFMALPVLKVYYIPVMAYCMA) traverse the membrane as a helical segment. At 260-301 (CDDHTVPVRLCSIWLVNLCKKCFSCTRREKESDLEVGIKMLK) the chain is on the cytoplasmic side.

This sequence belongs to the G-protein coupled receptor 1 family.

The protein resides in the host cell membrane. The polypeptide is G-protein coupled receptor homolog U51 (U51) (Homo sapiens (Human)).